A 142-amino-acid chain; its full sequence is Hemoglobin subunit alpha-1 (142 aa).

The Globin domain occupies 2–142 (VLSADDKSNV…VSTVLTSKYR (141 aa)). His-59 is an O2 binding site. His-88 is a heme b binding site.

It belongs to the globin family. Heterotetramer of two alpha chains and two beta chains. In terms of tissue distribution, red blood cells.

Its function is as follows. Involved in oxygen transport from the lung to the various peripheral tissues. In terms of biological role, hemopressin acts as an antagonist peptide of the cannabinoid receptor CNR1. Hemopressin-binding efficiently blocks cannabinoid receptor CNR1 and subsequent signaling. The chain is Hemoglobin subunit alpha-1 (HBA1) from Equus quagga burchellii (Burchell's zebra).